We begin with the raw amino-acid sequence, 89 residues long: Small ribosomal subunit protein uS15 (89 aa).

It belongs to the universal ribosomal protein uS15 family. In terms of assembly, part of the 30S ribosomal subunit. Forms a bridge to the 50S subunit in the 70S ribosome, contacting the 23S rRNA.

Functionally, one of the primary rRNA binding proteins, it binds directly to 16S rRNA where it helps nucleate assembly of the platform of the 30S subunit by binding and bridging several RNA helices of the 16S rRNA. In terms of biological role, forms an intersubunit bridge (bridge B4) with the 23S rRNA of the 50S subunit in the ribosome. The polypeptide is Small ribosomal subunit protein uS15 (Leifsonia xyli subsp. xyli (strain CTCB07)).